A 61-amino-acid polypeptide reads, in one-letter code: Small ribosomal subunit protein uS14 (61 aa).

4 residues coordinate Zn(2+): cysteine 24, cysteine 27, cysteine 40, and cysteine 43.

The protein belongs to the universal ribosomal protein uS14 family. Zinc-binding uS14 subfamily. In terms of assembly, part of the 30S ribosomal subunit. Contacts proteins S3 and S10. The cofactor is Zn(2+).

In terms of biological role, binds 16S rRNA, required for the assembly of 30S particles and may also be responsible for determining the conformation of the 16S rRNA at the A site. This Thermus thermophilus (strain ATCC BAA-163 / DSM 7039 / HB27) protein is Small ribosomal subunit protein uS14.